The primary structure comprises 449 residues: Tol-Pal system protein TolB (449 aa).

The first 36 residues, 1 to 36 (MDCPNMPLHINRRQMLLSAATAAGALALGPARDAFG), serve as a signal peptide directing secretion.

The protein belongs to the TolB family. As to quaternary structure, the Tol-Pal system is composed of five core proteins: the inner membrane proteins TolA, TolQ and TolR, the periplasmic protein TolB and the outer membrane protein Pal. They form a network linking the inner and outer membranes and the peptidoglycan layer.

It is found in the periplasm. In terms of biological role, part of the Tol-Pal system, which plays a role in outer membrane invagination during cell division and is important for maintaining outer membrane integrity. This is Tol-Pal system protein TolB from Rhodopseudomonas palustris (strain HaA2).